The sequence spans 668 residues: Golgin candidate 2 (668 aa).

Residues 22 to 317 (QAADSLRKDE…RQREERRRRR (296 aa)) form a disordered region. Residues 26–39 (SLRKDEKSETHDEV) are compositionally biased toward basic and acidic residues. Composition is skewed to polar residues over residues 64-86 (GSDS…LSSS) and 100-113 (SAPS…NTKL). Low complexity-rich tracts occupy residues 123–141 (STPN…GGTS) and 168–178 (SSSSNVVNSRG). Basic and acidic residues-rich tracts occupy residues 184-207 (TNKE…RNAP), 215-237 (THKE…RRSA), and 250-259 (GKRDGRESRR). Over residues 290-302 (DESESDYESDSST) the composition is skewed to acidic residues. Basic and acidic residues predominate over residues 303–312 (DSERERQREE). Positions 331–539 (AVIKERENMV…SQVEALSSEK (209 aa)) form a coiled coil. 2 helical membrane-spanning segments follow: residues 594-614 (KHLG…TVFL) and 622-642 (IWAV…LLSH).

Its subcellular location is the golgi apparatus membrane. In terms of biological role, golgi matrix protein playing a role in tethering of vesicles to Golgi membranes and in maintaining the overall structure of the Golgi apparatus. In Arabidopsis thaliana (Mouse-ear cress), this protein is Golgin candidate 2 (GC2).